Reading from the N-terminus, the 381-residue chain is Alkanesulfonate monooxygenase (381 aa).

Belongs to the SsuD family. In terms of assembly, homotetramer.

The enzyme catalyses an alkanesulfonate + FMNH2 + O2 = an aldehyde + FMN + sulfite + H2O + 2 H(+). In terms of biological role, catalyzes the desulfonation of aliphatic sulfonates. The sequence is that of Alkanesulfonate monooxygenase from Escherichia coli O6:H1 (strain CFT073 / ATCC 700928 / UPEC).